The sequence spans 64 residues: MKNKTHKGTAKRVKVTGSGKLVREQANRRHLLEGKSSTRTRRLKGIVEVDKADTKRMKRLLGKA.

Positions 1 to 14 are enriched in basic residues; sequence MKNKTHKGTAKRVK. A disordered region spans residues 1-29; sequence MKNKTHKGTAKRVKVTGSGKLVREQANRR.

The protein belongs to the bacterial ribosomal protein bL35 family.

In Corynebacterium glutamicum (strain R), this protein is Large ribosomal subunit protein bL35.